The primary structure comprises 484 residues: Aspartyl/glutamyl-tRNA(Asn/Gln) amidotransferase subunit B (484 aa).

Belongs to the GatB/GatE family. GatB subfamily. Heterotrimer of A, B and C subunits.

The enzyme catalyses L-glutamyl-tRNA(Gln) + L-glutamine + ATP + H2O = L-glutaminyl-tRNA(Gln) + L-glutamate + ADP + phosphate + H(+). The catalysed reaction is L-aspartyl-tRNA(Asn) + L-glutamine + ATP + H2O = L-asparaginyl-tRNA(Asn) + L-glutamate + ADP + phosphate + 2 H(+). Its function is as follows. Allows the formation of correctly charged Asn-tRNA(Asn) or Gln-tRNA(Gln) through the transamidation of misacylated Asp-tRNA(Asn) or Glu-tRNA(Gln) in organisms which lack either or both of asparaginyl-tRNA or glutaminyl-tRNA synthetases. The reaction takes place in the presence of glutamine and ATP through an activated phospho-Asp-tRNA(Asn) or phospho-Glu-tRNA(Gln). In Bordetella bronchiseptica (strain ATCC BAA-588 / NCTC 13252 / RB50) (Alcaligenes bronchisepticus), this protein is Aspartyl/glutamyl-tRNA(Asn/Gln) amidotransferase subunit B.